Consider the following 376-residue polypeptide: Queuine tRNA-ribosyltransferase (376 aa).

The active-site Proton acceptor is the Asp89. Substrate is bound by residues 89–93, Asp143, Gln194, and Gly221; that span reads DSGGF. The RNA binding stretch occupies residues 252–258; that stretch reads GVGLPSN. Asp271 acts as the Nucleophile in catalysis. Residues 276 to 280 are RNA binding; important for wobble base 34 recognition; it reads ARNGR. Residues Cys309, Cys311, Cys314, and His340 each coordinate Zn(2+).

This sequence belongs to the queuine tRNA-ribosyltransferase family. In terms of assembly, homodimer. Within each dimer, one monomer is responsible for RNA recognition and catalysis, while the other monomer binds to the replacement base PreQ1. Requires Zn(2+) as cofactor.

It catalyses the reaction 7-aminomethyl-7-carbaguanine + guanosine(34) in tRNA = 7-aminomethyl-7-carbaguanosine(34) in tRNA + guanine. Its pathway is tRNA modification; tRNA-queuosine biosynthesis. In terms of biological role, catalyzes the base-exchange of a guanine (G) residue with the queuine precursor 7-aminomethyl-7-deazaguanine (PreQ1) at position 34 (anticodon wobble position) in tRNAs with GU(N) anticodons (tRNA-Asp, -Asn, -His and -Tyr). Catalysis occurs through a double-displacement mechanism. The nucleophile active site attacks the C1' of nucleotide 34 to detach the guanine base from the RNA, forming a covalent enzyme-RNA intermediate. The proton acceptor active site deprotonates the incoming PreQ1, allowing a nucleophilic attack on the C1' of the ribose to form the product. After dissociation, two additional enzymatic reactions on the tRNA convert PreQ1 to queuine (Q), resulting in the hypermodified nucleoside queuosine (7-(((4,5-cis-dihydroxy-2-cyclopenten-1-yl)amino)methyl)-7-deazaguanosine). This is Queuine tRNA-ribosyltransferase from Clostridium tetani (strain Massachusetts / E88).